The primary structure comprises 140 residues: MAIERTFSILKPDATARNLTGAINAVIEEAGLRIVAQRRIRMSEAQAKTFYEVHAERPFYGELVSFMTSGPVVVQVLEGDNAVAKYREVMGATNPAQAAEGTIRKRFAVSVGENSVHGSDSAENAAIEIAQFFTEADIVG.

Residues Lys-11, Phe-59, Arg-87, Thr-93, Arg-104, and Asn-114 each coordinate ATP. Catalysis depends on His-117, which acts as the Pros-phosphohistidine intermediate.

Belongs to the NDK family. Homotetramer. Mg(2+) is required as a cofactor.

It is found in the cytoplasm. It carries out the reaction a 2'-deoxyribonucleoside 5'-diphosphate + ATP = a 2'-deoxyribonucleoside 5'-triphosphate + ADP. The enzyme catalyses a ribonucleoside 5'-diphosphate + ATP = a ribonucleoside 5'-triphosphate + ADP. Functionally, major role in the synthesis of nucleoside triphosphates other than ATP. The ATP gamma phosphate is transferred to the NDP beta phosphate via a ping-pong mechanism, using a phosphorylated active-site intermediate. In Methylobacterium sp. (strain 4-46), this protein is Nucleoside diphosphate kinase.